Here is a 323-residue protein sequence, read N- to C-terminus: Protoheme IX farnesyltransferase (323 aa).

The next 9 helical transmembrane spans lie at 28 to 48 (IIPLLLITTAAAMWIASNGQV), 50 to 70 (PVLLLVTLLGGTLAAASAQTL), 99 to 119 (HALIFAIILAVLSFTLFVVFV), 122 to 142 (ASALLAMSGIAFYMLIYTHML), 150 to 170 (IVIGGAAGSIPPLVGWAAVTG), 178 to 198 (ALFAIIFLWTPPHFWALALMI), 223 to 243 (IWIYTLIVVPFTFILVYPLAA), 244 to 264 (SGIVYTLVALVLGGMFIYKTW), and 279 to 299 (LFKYSILYMMLLCTGMVVDSL).

This sequence belongs to the UbiA prenyltransferase family. Protoheme IX farnesyltransferase subfamily.

The protein localises to the cell inner membrane. It carries out the reaction heme b + (2E,6E)-farnesyl diphosphate + H2O = Fe(II)-heme o + diphosphate. It participates in porphyrin-containing compound metabolism; heme O biosynthesis; heme O from protoheme: step 1/1. In terms of biological role, converts heme B (protoheme IX) to heme O by substitution of the vinyl group on carbon 2 of heme B porphyrin ring with a hydroxyethyl farnesyl side group. The polypeptide is Protoheme IX farnesyltransferase (Gloeothece citriformis (strain PCC 7424) (Cyanothece sp. (strain PCC 7424))).